Reading from the N-terminus, the 141-residue chain is Hemoglobin subunit alpha (141 aa).

Residues valine 1–arginine 141 form the Globin domain. Serine 3 is subject to Phosphoserine. Residues lysine 7 and lysine 11 each carry the N6-succinyllysine modification. An N6-acetyllysine; alternate modification is found at lysine 16. Lysine 16 carries the post-translational modification N6-succinyllysine; alternate. Tyrosine 24 is subject to Phosphotyrosine. Phosphoserine is present on serine 35. The residue at position 40 (lysine 40) is an N6-succinyllysine. Histidine 58 contributes to the O2 binding site. Residue histidine 87 participates in heme b binding. Serine 102 is modified (phosphoserine). Threonine 108 is modified (phosphothreonine). Phosphoserine occurs at positions 124 and 131. A phosphothreonine mark is found at threonine 134 and threonine 137. Serine 138 is modified (phosphoserine).

Belongs to the globin family. As to quaternary structure, heterotetramer of two alpha chains and two beta chains. As to expression, red blood cells.

Involved in oxygen transport from the lung to the various peripheral tissues. Functionally, hemopressin acts as an antagonist peptide of the cannabinoid receptor CNR1. Hemopressin-binding efficiently blocks cannabinoid receptor CNR1 and subsequent signaling. This is Hemoglobin subunit alpha from Pteropus vampyrus (Large flying fox).